Consider the following 477-residue polypeptide: Argininosuccinate lyase (477 aa).

The protein belongs to the lyase 1 family. Argininosuccinate lyase subfamily.

The protein resides in the cytoplasm. The enzyme catalyses 2-(N(omega)-L-arginino)succinate = fumarate + L-arginine. It participates in amino-acid biosynthesis; L-arginine biosynthesis; L-arginine from L-ornithine and carbamoyl phosphate: step 3/3. The protein is Argininosuccinate lyase of Corynebacterium efficiens (strain DSM 44549 / YS-314 / AJ 12310 / JCM 11189 / NBRC 100395).